We begin with the raw amino-acid sequence, 116 residues long: Small ribosomal subunit protein uS10m (116 aa).

Belongs to the universal ribosomal protein uS10 family.

Its subcellular location is the mitochondrion. The polypeptide is Small ribosomal subunit protein uS10m (RPS10) (Reclinomonas americana).